A 367-amino-acid polypeptide reads, in one-letter code: Beta sliding clamp (367 aa).

It belongs to the beta sliding clamp family. As to quaternary structure, forms a ring-shaped head-to-tail homodimer around DNA which binds and tethers DNA polymerases and other proteins to the DNA. The DNA replisome complex has a single clamp-loading complex (3 tau and 1 each of delta, delta', psi and chi subunits) which binds 3 Pol III cores (1 core on the leading strand and 2 on the lagging strand) each with a beta sliding clamp dimer. Additional proteins in the replisome are other copies of gamma, psi and chi, Ssb, DNA helicase and RNA primase.

The protein localises to the cytoplasm. Functionally, confers DNA tethering and processivity to DNA polymerases and other proteins. Acts as a clamp, forming a ring around DNA (a reaction catalyzed by the clamp-loading complex) which diffuses in an ATP-independent manner freely and bidirectionally along dsDNA. Initially characterized for its ability to contact the catalytic subunit of DNA polymerase III (Pol III), a complex, multichain enzyme responsible for most of the replicative synthesis in bacteria; Pol III exhibits 3'-5' exonuclease proofreading activity. The beta chain is required for initiation of replication as well as for processivity of DNA replication. The chain is Beta sliding clamp (dnaN) from Pseudomonas putida (strain ATCC 47054 / DSM 6125 / CFBP 8728 / NCIMB 11950 / KT2440).